Here is a 224-residue protein sequence, read N- to C-terminus: Ribonuclease HII (224 aa).

The 189-residue stretch at 36-224 (RGVAGVDEVG…RRSFLRRFLG (189 aa)) folds into the RNase H type-2 domain. A divalent metal cation-binding residues include Asp-42, Glu-43, and Asp-138.

It belongs to the RNase HII family. Requires Mn(2+) as cofactor. The cofactor is Mg(2+).

It localises to the cytoplasm. The catalysed reaction is Endonucleolytic cleavage to 5'-phosphomonoester.. Endonuclease that specifically degrades the RNA of RNA-DNA hybrids. In Parasynechococcus marenigrum (strain WH8102), this protein is Ribonuclease HII.